A 325-amino-acid polypeptide reads, in one-letter code: MANQKLPTLKYTGKSESAVPIVSESELQTVTAEPWVKISDKGLQLEGLNFNREGQLFLLDVFEGNIFKVNPATKEVTTKFQSVKDNPAAIKVHKDGRLFICYLGDFKTTGGIFATTEKGEQIEEIISDLNTEYCIDDMVFDSKGGFYFTDFRGYSTQPLGGVYYVDPDFKTVTPIIQNISVANGIALSTDEKVLWVTETTTNRLHRIALEDDGVTIAPFGATIPYYFTGHEGPDSCCIDSNDNLYVAMYGQGRVLVFNKRGYPIGQILMPGRDDGKMLRTTHPQFIPGTNQLIICTNDIENHSEGGSMLYTVNGFAKGYESYQFQ.

Ca(2+) is bound by residues Glu46, Thr108, Gly110, Asp128, Thr131, Tyr133, Asp136, Asn183, Asp234, and Ser235. Asp234 acts as the Proton donor in catalysis.

It belongs to the SMP-30/CGR1 family. Ca(2+) serves as cofactor.

The protein localises to the cytoplasm. In terms of biological role, exhibits lactonase activity. Acts in cells with perturbed membrane integrity and is possibly related to the membrane homeostasis. The chain is Lactonase drp35 (drp35) from Staphylococcus epidermidis (strain ATCC 35984 / DSM 28319 / BCRC 17069 / CCUG 31568 / BM 3577 / RP62A).